We begin with the raw amino-acid sequence, 196 residues long: Small ribosomal subunit protein uS4c (196 aa).

Residues 15–43 (LGALPGLTRKTPKSGSNQKKKFHSGKKEQ) are disordered. Residues 89–150 (MRLDNILFRL…NQRSKRLVQN (62 aa)) form the S4 RNA-binding domain.

Belongs to the universal ribosomal protein uS4 family. As to quaternary structure, part of the 30S ribosomal subunit. Contacts protein S5. The interaction surface between S4 and S5 is involved in control of translational fidelity.

It localises to the plastid. The protein localises to the chloroplast. Its function is as follows. One of the primary rRNA binding proteins, it binds directly to 16S rRNA where it nucleates assembly of the body of the 30S subunit. With S5 and S12 plays an important role in translational accuracy. This is Small ribosomal subunit protein uS4c (rps4) from Melinis repens (Red Natal grass).